A 179-amino-acid chain; its full sequence is Large ribosomal subunit protein uL6 (179 aa).

It belongs to the universal ribosomal protein uL6 family. In terms of assembly, part of the 50S ribosomal subunit.

Functionally, this protein binds to the 23S rRNA, and is important in its secondary structure. It is located near the subunit interface in the base of the L7/L12 stalk, and near the tRNA binding site of the peptidyltransferase center. This chain is Large ribosomal subunit protein uL6, found in Synechococcus elongatus (strain ATCC 33912 / PCC 7942 / FACHB-805) (Anacystis nidulans R2).